An 84-amino-acid polypeptide reads, in one-letter code: Small ribosomal subunit protein uS15 (84 aa).

The protein belongs to the universal ribosomal protein uS15 family. In terms of assembly, part of the 30S ribosomal subunit. Forms a bridge to the 50S subunit in the 70S ribosome, contacting the 23S rRNA.

Functionally, one of the primary rRNA binding proteins, it binds directly to 16S rRNA where it helps nucleate assembly of the platform of the 30S subunit by binding and bridging several RNA helices of the 16S rRNA. In terms of biological role, forms an intersubunit bridge (bridge B4) with the 23S rRNA of the 50S subunit in the ribosome. The chain is Small ribosomal subunit protein uS15 from Fervidobacterium nodosum (strain ATCC 35602 / DSM 5306 / Rt17-B1).